A 449-amino-acid chain; its full sequence is UDP-glycosyltransferase 74F2 (449 aa).

UDP-alpha-D-glucose-binding positions include Ser-273, 325 to 327 (SPQ), 342 to 350 (HCGWNSTME), and 364 to 367 (WTDQ).

The protein belongs to the UDP-glycosyltransferase family. As to expression, expressed in seedlings.

Its function is as follows. Glycosyltransferase that glucosylates benzoic acid and derivatives. Substrate preference is benzoic acid &gt; salicylic acid (SA) &gt; 3-hydroxybenzoic acid &gt; 4-hydroxybenzoic acid. Catalyzes the formation of both SA 2-O-beta-D-glucoside (SAG) and SA glucose ester (SGE). Has high affinity for the tryptophan precursor anthranilate. Catalyzes the formation of anthranilate glucose ester. Is the major source of this activity in the plant. The sequence is that of UDP-glycosyltransferase 74F2 (UGT74F2) from Arabidopsis thaliana (Mouse-ear cress).